A 317-amino-acid chain; its full sequence is Beta-ketoacyl-[acyl-carrier-protein] synthase III (317 aa).

Catalysis depends on residues Cys-112 and His-244. An ACP-binding region spans residues 245–249 (QANIR). Residue Asn-274 is part of the active site.

The protein belongs to the thiolase-like superfamily. FabH family. As to quaternary structure, homodimer.

The protein localises to the cytoplasm. It carries out the reaction malonyl-[ACP] + acetyl-CoA + H(+) = 3-oxobutanoyl-[ACP] + CO2 + CoA. Its pathway is lipid metabolism; fatty acid biosynthesis. Functionally, catalyzes the condensation reaction of fatty acid synthesis by the addition to an acyl acceptor of two carbons from malonyl-ACP. Catalyzes the first condensation reaction which initiates fatty acid synthesis and may therefore play a role in governing the total rate of fatty acid production. Possesses both acetoacetyl-ACP synthase and acetyl transacylase activities. Its substrate specificity determines the biosynthesis of branched-chain and/or straight-chain of fatty acids. This Rickettsia prowazekii (strain Madrid E) protein is Beta-ketoacyl-[acyl-carrier-protein] synthase III.